The chain runs to 325 residues: Hydroxylase/desaturase poxK (325 aa).

Positions Met-1 to Ala-12 are enriched in low complexity. A disordered region spans residues Met-1 to Lys-25.

Belongs to the asaB hydroxylase/desaturase family.

It participates in secondary metabolite biosynthesis. Its function is as follows. Hydroxylase/desaturase; part of the gene cluster that mediates the biosynthesis of oxaleimides, cytotoxic compounds containing an unusual disubstituted succinimide moiety. The first step of the pathway is provided by the HR-PKS poxF that serves in a new mode of collaborative biosynthesis with the PKS-NRPS poxE, by providing the olefin containing amino acid substrate via the synthesis of an ACP-bound dec-4-enoate. The cytochrome P450 monooxygenase poxM-catalyzed oxidation at the alpha-position creates the enzyme-bound 2-hydroxydec-4-enoyl-ACP thioester, which may be prone to spontaneous hydrolysis to yield 2-hydroxydec-4-enoic acid due to increased electrophilicity of the carbonyl. 2-hydroxydec-4-enoic acid can then be further oxidized by poxM to yield the alpha-ketoacid 2-oxodec-4-enoicacid, which is reductively aminated by the aminotransferase poxL to yield (S,E)-2-aminodec-4-enoic acid. The Hybrid PKS-NRPS synthetase poxE then performs condensation between the octaketide product of its PKS modules and the amino group of (S,E)-2-aminodec-4-enoic acid which is activated and incorporated by the adenylation domain. The resulting aminoacyl product can be cyclized by the Diels-Alderase PoxQ and reductively released by the reductive (R) domain of poxE to yield an aldehyde intermediate. The released aldehyde is then substrate for a Knoevenagel condensation by the hydrolyase poxO followed by an oxidation at the 5-position of the pyrrolidone ring. The presence of the olefin from the amino acid building block allows for migration of the substituted allyl group to occur. This allylic transposition reaction takes place in a conjugate addition, semipinacol-like fashion to yield a succinimide intermediate. Iterative two-electron oxidations of the C7 methyl of the succinimide intermediate to the carboxylic acid can be catalyzed by one of two remaining cytochrome P450 monooxygenasess poxC or poxD to yield oxaleimide A. Subsequent oxidation yields the maleimide scaffold oxaleimide I. Both oxaleimide A and oxaleimide I can undergo oxidative modifications in the decalin ring to yield the series of products oxaleimides B to H. This is Hydroxylase/desaturase poxK from Penicillium oxalicum.